Reading from the N-terminus, the 159-residue chain is Endoribonuclease YbeY (159 aa).

Positions 123, 127, and 133 each coordinate Zn(2+).

Belongs to the endoribonuclease YbeY family. Zn(2+) serves as cofactor.

It localises to the cytoplasm. Single strand-specific metallo-endoribonuclease involved in late-stage 70S ribosome quality control and in maturation of the 3' terminus of the 16S rRNA. This chain is Endoribonuclease YbeY, found in Bacillus pumilus (strain SAFR-032).